Here is a 99-residue protein sequence, read N- to C-terminus: Nucleoid-associated protein UUR10_0100 (99 aa).

It belongs to the YbaB/EbfC family. Homodimer.

The protein resides in the cytoplasm. It localises to the nucleoid. Functionally, binds to DNA and alters its conformation. May be involved in regulation of gene expression, nucleoid organization and DNA protection. The chain is Nucleoid-associated protein UUR10_0100 from Ureaplasma urealyticum serovar 10 (strain ATCC 33699 / Western).